The sequence spans 1141 residues: Tetratricopeptide repeat protein 17 (1141 aa).

The TPR 1 repeat unit spans residues 295 to 328 (FTSYYTLGNIYAMLGEYNHSVLCYDHALQARPGF). The stretch at 340–382 (CQQKLEQKLEAQHRSLQRTLNELKEYQKQHDHYLRQQEILEKH) forms a coiled coil. 5 TPR repeats span residues 619-652 (WLILNEAGLYWRAVGNSTFAIACLQRALNLAPLQ), 689-722 (PLTFLSLGNAYLALKNISGALEAFRQALKLTTKC), 1014-1048 (SWVLSSMAALYWRVKGQGKKAIDCLRQALHYAPHQ), 1051-1084 (DVPLISLANILHNAKLWNDAVIVATMAVEIAPHF), and 1085-1118 (AVNHFTLGNVYVAMEEFEKALVWYESTLKLQPEF).

It belongs to the TTC17 family. In terms of assembly, interacts with CATIP. As to expression, expressed in germ cells as well as in somatic cells of the testis (at protein level).

It is found in the cytoplasm. It localises to the cell membrane. Its subcellular location is the cytoskeleton. In terms of biological role, plays a role in primary ciliogenesis by modulating actin polymerization. The protein is Tetratricopeptide repeat protein 17 (TTC17) of Homo sapiens (Human).